The chain runs to 482 residues: FAD-linked oxidoreductase alt4 (482 aa).

The FAD-binding PCMH-type domain occupies 53–211 (ERPTYLAIVD…LEATFQVYPQ (159 aa)).

Belongs to the oxygen-dependent FAD-linked oxidoreductase family. FAD serves as cofactor.

The protein operates within secondary metabolite biosynthesis. Functionally, FAD-linked oxidoreductase; part of the gene cluster that mediates the biosynthesis of alternapyrone derivatives. Alternapyrone is a decaketide with octa-methylation from methionine on every C2 unit except the third unit. All the domains in the polyketide synthase alt5 are apparently involved in alternapyrone synthesis, that is, the 8 CMeT, 7 KR, 7 DH, and 4 ER reactions in the 9 KS-mediated condensation steps required for alternapyrone synthesis. the alternapyrone produced by alt5 might be intensively modified by cytochrome P450 monooxygenases alt1, alt2 and alt3 and FAD-dependent oxidoreductase alt4 present in the alt gene cluster. The chain is FAD-linked oxidoreductase alt4 from Alternaria solani.